A 281-amino-acid chain; its full sequence is NADPH-dependent 7-cyano-7-deazaguanine reductase (281 aa).

81 to 83 (VES) is a binding site for substrate. Residue 83–84 (SK) coordinates NADPH. Cys188 acts as the Thioimide intermediate in catalysis. Catalysis depends on Asp195, which acts as the Proton donor. 227-228 (HE) serves as a coordination point for substrate. 256 to 257 (RG) is an NADPH binding site.

It belongs to the GTP cyclohydrolase I family. QueF type 2 subfamily. In terms of assembly, homodimer.

The protein localises to the cytoplasm. The enzyme catalyses 7-aminomethyl-7-carbaguanine + 2 NADP(+) = 7-cyano-7-deazaguanine + 2 NADPH + 3 H(+). It participates in tRNA modification; tRNA-queuosine biosynthesis. Catalyzes the NADPH-dependent reduction of 7-cyano-7-deazaguanine (preQ0) to 7-aminomethyl-7-deazaguanine (preQ1). The sequence is that of NADPH-dependent 7-cyano-7-deazaguanine reductase from Acidovorax ebreus (strain TPSY) (Diaphorobacter sp. (strain TPSY)).